Reading from the N-terminus, the 376-residue chain is Lipoyl synthase 1, chloroplastic (376 aa).

Positions 1-13 are enriched in polar residues; sequence MIEQSLSKPSFSL. Disordered regions lie at residues 1-25 and 47-75; these read MIEQ…KSKS and IDAK…DPNV. The N-terminal 35 residues, 1–35, are a transit peptide targeting the chloroplast; that stretch reads MIEQSLSKPSFSLSIPIPQPPKSKSSFLCSYSKIR. [4Fe-4S] cluster-binding residues include Cys107, Cys112, Cys118, Cys138, Cys142, Cys145, and Ser353. Residues 121 to 342 form the Radical SAM core domain; it reads GGGDGIATAT…KEYGESIGFR (222 aa).

The protein belongs to the radical SAM superfamily. Lipoyl synthase family. [4Fe-4S] cluster serves as cofactor.

It is found in the plastid. Its subcellular location is the chloroplast. It catalyses the reaction [[Fe-S] cluster scaffold protein carrying a second [4Fe-4S](2+) cluster] + N(6)-octanoyl-L-lysyl-[protein] + 2 oxidized [2Fe-2S]-[ferredoxin] + 2 S-adenosyl-L-methionine + 4 H(+) = [[Fe-S] cluster scaffold protein] + N(6)-[(R)-dihydrolipoyl]-L-lysyl-[protein] + 4 Fe(3+) + 2 hydrogen sulfide + 2 5'-deoxyadenosine + 2 L-methionine + 2 reduced [2Fe-2S]-[ferredoxin]. It functions in the pathway protein modification; protein lipoylation via endogenous pathway; protein N(6)-(lipoyl)lysine from octanoyl-[acyl-carrier-protein]: step 2/2. Functionally, catalyzes the radical-mediated insertion of two sulfur atoms into the C-6 and C-8 positions of the octanoyl moiety bound to the lipoyl domains of lipoate-dependent enzymes, thereby converting the octanoylated domains into lipoylated derivatives. The polypeptide is Lipoyl synthase 1, chloroplastic (Populus trichocarpa (Western balsam poplar)).